Here is a 142-residue protein sequence, read N- to C-terminus: Myosin-2 essential light chain (142 aa).

EF-hand domains lie at 2 to 37 (DDLA…LGQN) and 75 to 110 (HTVE…LGER).

In terms of assembly, myosin is a hexamer of 2 heavy chains and 4 light chains (two regulatory light chains and two essential light chains).

It localises to the cytoplasm. Its subcellular location is the cytoskeleton. Its function is as follows. Required for cytokinesis and embryo elongation. May regulate myosin II complex formation and/or the association of myosin with actin. May be involved in the organization of mlc-4 and nmy-2 into bundles. This Caenorhabditis elegans protein is Myosin-2 essential light chain.